The chain runs to 429 residues: S-adenosylmethionine synthase (429 aa).

Histidine 14 is a binding site for ATP. Aspartate 16 is a Mg(2+) binding site. Glutamate 42 contacts K(+). Positions 55 and 98 each coordinate L-methionine. Positions glutamine 98–arginine 108 are flexible loop. ATP is bound by residues aspartate 165 to lysine 167, lysine 252 to phenylalanine 253, aspartate 261, arginine 267 to lysine 268, alanine 284, and lysine 288. Residue aspartate 261 participates in L-methionine binding. Residue lysine 292 coordinates L-methionine.

Belongs to the AdoMet synthase family. Homotetramer; dimer of dimers. It depends on Mg(2+) as a cofactor. K(+) serves as cofactor.

The protein localises to the cytoplasm. The enzyme catalyses L-methionine + ATP + H2O = S-adenosyl-L-methionine + phosphate + diphosphate. It functions in the pathway amino-acid biosynthesis; S-adenosyl-L-methionine biosynthesis; S-adenosyl-L-methionine from L-methionine: step 1/1. In terms of biological role, catalyzes the formation of S-adenosylmethionine (AdoMet) from methionine and ATP. The overall synthetic reaction is composed of two sequential steps, AdoMet formation and the subsequent tripolyphosphate hydrolysis which occurs prior to release of AdoMet from the enzyme. This chain is S-adenosylmethionine synthase, found in Porphyromonas gingivalis (strain ATCC 33277 / DSM 20709 / CIP 103683 / JCM 12257 / NCTC 11834 / 2561).